Consider the following 341-residue polypeptide: Anthranilate phosphoribosyltransferase (341 aa).

5-phospho-alpha-D-ribose 1-diphosphate contacts are provided by residues glycine 79, 82 to 83 (GD), threonine 87, 89 to 92 (NIST), 107 to 115 (KHGNRAVSS), and serine 119. Glycine 79 provides a ligand contact to anthranilate. Serine 91 contacts Mg(2+). Asparagine 110 is an anthranilate binding site. An anthranilate-binding site is contributed by arginine 165. The Mg(2+) site is built by aspartate 224 and glutamate 225.

The protein belongs to the anthranilate phosphoribosyltransferase family. As to quaternary structure, homodimer. Mg(2+) serves as cofactor.

The enzyme catalyses N-(5-phospho-beta-D-ribosyl)anthranilate + diphosphate = 5-phospho-alpha-D-ribose 1-diphosphate + anthranilate. The protein operates within amino-acid biosynthesis; L-tryptophan biosynthesis; L-tryptophan from chorismate: step 2/5. In terms of biological role, catalyzes the transfer of the phosphoribosyl group of 5-phosphorylribose-1-pyrophosphate (PRPP) to anthranilate to yield N-(5'-phosphoribosyl)-anthranilate (PRA). The sequence is that of Anthranilate phosphoribosyltransferase from Bacillus cereus (strain B4264).